The sequence spans 163 residues: MSDKAAGETKNGNGATTEPSLNILAQYVKDLSFESPGAPLSLRPREKAPSININVNVNANPLSETDFDVVLTLEAKAVDGKDILFNTELVYGGVFRIQGIPQEHMLPLLFIECPRLLFPFARQIIADATRNGGYPPLMIDPIDFAQMFQQRMAEEQAESAVKS.

Belongs to the SecB family. Homotetramer, a dimer of dimers. One homotetramer interacts with 1 SecA dimer.

The protein localises to the cytoplasm. In terms of biological role, one of the proteins required for the normal export of preproteins out of the cell cytoplasm. It is a molecular chaperone that binds to a subset of precursor proteins, maintaining them in a translocation-competent state. It also specifically binds to its receptor SecA. This chain is Protein-export protein SecB, found in Brucella canis (strain ATCC 23365 / NCTC 10854 / RM-666).